Reading from the N-terminus, the 315-residue chain is Calumenin (315 aa).

Positions 1 to 19 (MDLRQFLMCLSLCTAFALS) are cleaved as a signal peptide. Phosphoserine is present on Ser44. Tyr47 carries the post-translational modification Phosphotyrosine. Position 65 is a phosphothreonine (Thr65). EF-hand domains follow at residues 68–103 (ESKE…AQKR), 104–139 (WIYE…YVLD), 151–186 (QMMV…EEYD), 188–223 (MKDI…HDGN), 229–264 (WVKT…SDYD), and 265–300 (HAEA…FVGS). Ser69 is subject to Phosphoserine. Ca(2+) contacts are provided by Asp81, Asp83, Asp85, Glu92, Asp117, Asn119, Asp121, and Glu128. Residue Asn131 is glycosylated (N-linked (GlcNAc...) asparagine). Asp164 is a Ca(2+) binding site. Lys165 is modified (N6-acetyllysine). 12 residues coordinate Ca(2+): Asp166, Asp168, Glu175, Asp201, Asn203, Asp205, Glu212, Asp242, Asn244, Asp246, Lys248, and Glu253. Thr254 is subject to Phosphothreonine. Phosphoserine is present on residues Ser261 and Ser277. The Ca(2+) site is built by Asp278, Asn280, Asp282, Lys284, and Glu289. The short motif at 312–315 (HDEF) is the Prevents secretion from ER element.

Belongs to the CREC family. In terms of assembly, interacts with GGCX.

It is found in the endoplasmic reticulum membrane. Its subcellular location is the golgi apparatus. It localises to the secreted. The protein resides in the melanosome. The protein localises to the sarcoplasmic reticulum lumen. Functionally, involved in regulation of vitamin K-dependent carboxylation of multiple N-terminal glutamate residues. Seems to inhibit gamma-carboxylase GGCX. Binds 7 calcium ions with a low affinity. The chain is Calumenin (CALU) from Pongo abelii (Sumatran orangutan).